The chain runs to 36 residues: Lambda-hexatoxin-Hv1a (36 aa).

Disulfide bonds link Cys3–Cys17, Cys10–Cys22, Cys13–Cys14, and Cys16–Cys33.

It belongs to the neurotoxin 11 (kappa toxin) family. In terms of tissue distribution, expressed by the venom gland.

The protein resides in the secreted. This excitatory toxin inhibits insect calcium-activated potassium (KCa) channels (Slo-type). The polypeptide is Lambda-hexatoxin-Hv1a (Hadronyche versuta (Blue mountains funnel-web spider)).